A 61-amino-acid polypeptide reads, in one-letter code: Potassium channel toxin alpha-KTx 15.6 (61 aa).

The signal sequence occupies residues 1–23 (MKAFYGMLVIFILCSTCYISVDS). The residue at position 24 (Gln24) is a Pyrrolidone carboxylic acid. 3 cysteine pairs are disulfide-bonded: Cys31–Cys52, Cys37–Cys57, and Cys41–Cys59.

The protein belongs to the short scorpion toxin superfamily. Potassium channel inhibitor family. Alpha-KTx 15 subfamily. As to expression, expressed by the venom gland.

It localises to the secreted. Functionally, irreversibly blocks the A-type voltage-gated potassium channels in rat cerebellum granular cells (190 nM induce 50% inhibitory effect) (IC(50)=190 nM). Also weakly inhibits Kv1.2/KCNA2 and Kv1.3/KCNA3. The chain is Potassium channel toxin alpha-KTx 15.6 from Tityus discrepans (Venezuelan scorpion).